The chain runs to 311 residues: Protein lifeguard 3 (311 aa).

Disordered regions lie at residues 1-37 (MSNPSAPPPYEDRNPLYPGPPPPGGYGQPSVLPGGYP) and 50-72 (PAGYPQPMPPTHPMPMNYGPGHG). Over residues 53–62 (YPQPMPPTHP) the composition is skewed to pro residues. Phosphoserine is present on residues serine 81 and serine 83. The next 7 membrane-spanning stretches (helical) occupy residues 110 to 130 (LLITVAIIAIFTFVEPVSAFV), 134 to 154 (VAVYYVSYAVFVVTYLILACC), 165 to 185 (IILLTLFTFAMGFMTGTISSM), 190 to 210 (AVIIAMIITAVVSISVTIFCF), 221 to 241 (GLFCVLGIVLLVTGIVTSIVL), 246 to 266 (VYWLHMLYAALGAICFTLFLA), and 286 to 306 (ITGALQIYTDIIYIFTFVLQL).

The protein belongs to the BI1 family. LFG subfamily.

The protein resides in the membrane. Its subcellular location is the lysosome membrane. It localises to the endosome membrane. Its function is as follows. Negatively regulates aortic matrix metalloproteinase-9 (MMP9) production and may play a protective role in vascular remodeling. The chain is Protein lifeguard 3 (TMBIM1) from Homo sapiens (Human).